The primary structure comprises 559 residues: Actin-binding protein WASF1 (559 aa).

Disordered regions lie at residues 170–202 (EDKR…DRRR), 304–383 (IENR…GVLH), and 412–490 (VHPL…HPST). A compositionally biased stretch (basic and acidic residues) spans 182–202 (KNLDRPHEPEKVPRAPHDRRR). Over residues 304 to 313 (IENRPQSPAT) the composition is skewed to polar residues. Over residues 322-332 (PTPPPPPPPLP) the composition is skewed to pro residues. Residues 333–346 (SALSTSSLRASMTS) show a composition bias toward low complexity. Residue R341 is modified to Asymmetric dimethylarginine; alternate. Position 341 is an omega-N-methylarginine; alternate (R341). 3 stretches are compositionally biased toward pro residues: residues 347–360 (TPPP…PPPA), 423–437 (LPPP…PPGI), and 460–477 (STAP…PPSQ). Residue S489 is modified to Phosphoserine. Residues 497 to 514 (ARSVLLEAIRKGIQLRKV) enclose the WH2 domain.

This sequence belongs to the SCAR/WAVE family. In terms of assembly, component of the WAVE1 complex composed of ABI2, CYFIP1 or CYFIP2, BRK1, NCKAP1 and WASF1/WAVE1. Within the complex, a heterodimer containing NCKAP1 and CYFIP1 interacts with a heterotrimer formed by WAVE1, ABI2 and BRK1. CYFIP2 binds to activated RAC1 which causes the complex to dissociate, releasing activated WASF1. The complex can also be activated by NCK1. Binds actin and the Arp2/3 complex. Interacts with BAIAP2. Interacts with SHANK3; the interaction mediates the association of SHANK3 with the WAVE1 complex. Interacts with ABI1 (via N-terminus). Interacts with SORBS2; this interaction greatly enhances phosphorylation by ABL1 and dephosphorylation by PTPN12 and might mediate partial to focal adhesion sites.

It is found in the cytoplasm. The protein resides in the cytoskeleton. It localises to the synapse. The protein localises to the cell junction. Its subcellular location is the focal adhesion. Functionally, downstream effector molecule involved in the transmission of signals from tyrosine kinase receptors and small GTPases to the actin cytoskeleton. Promotes formation of actin filaments. Part of the WAVE complex that regulates lamellipodia formation. The WAVE complex regulates actin filament reorganization via its interaction with the Arp2/3 complex. As component of the WAVE1 complex, required for BDNF-NTRK2 endocytic trafficking and signaling from early endosomes. Also involved in the regulation of mitochondrial dynamics. The chain is Actin-binding protein WASF1 (WASF1) from Pongo abelii (Sumatran orangutan).